The primary structure comprises 147 residues: MFQGAIALSLDAKGRLAIPARHRDALVPDGAPLVITAHPHKCLLVYPLSAWEPIRDRIAAMPGFDPRTSAFKRLLVGFAQEEGLDAAGRVLLAGSLRQWAQLEKQVWLVGQGAHFELWSDAGWQAQQEAMLALTGDALPPGFESLAL.

SpoVT-AbrB domains lie at 5-50 (AIAL…PLSA) and 79-122 (AQEE…SDAG).

It belongs to the MraZ family. As to quaternary structure, forms oligomers.

It is found in the cytoplasm. It localises to the nucleoid. The chain is Transcriptional regulator MraZ from Aromatoleum aromaticum (strain DSM 19018 / LMG 30748 / EbN1) (Azoarcus sp. (strain EbN1)).